The primary structure comprises 201 residues: ATP-dependent Clp protease proteolytic subunit (201 aa).

Ser-97 acts as the Nucleophile in catalysis. His-122 is a catalytic residue.

Belongs to the peptidase S14 family. In terms of assembly, fourteen ClpP subunits assemble into 2 heptameric rings which stack back to back to give a disk-like structure with a central cavity, resembling the structure of eukaryotic proteasomes.

The protein localises to the cytoplasm. The catalysed reaction is Hydrolysis of proteins to small peptides in the presence of ATP and magnesium. alpha-casein is the usual test substrate. In the absence of ATP, only oligopeptides shorter than five residues are hydrolyzed (such as succinyl-Leu-Tyr-|-NHMec, and Leu-Tyr-Leu-|-Tyr-Trp, in which cleavage of the -Tyr-|-Leu- and -Tyr-|-Trp bonds also occurs).. Functionally, cleaves peptides in various proteins in a process that requires ATP hydrolysis. Has a chymotrypsin-like activity. Plays a major role in the degradation of misfolded proteins. In Nitratidesulfovibrio vulgaris (strain DSM 19637 / Miyazaki F) (Desulfovibrio vulgaris), this protein is ATP-dependent Clp protease proteolytic subunit.